A 421-amino-acid chain; its full sequence is ATP-dependent RNA helicase RhlB (421 aa).

The short motif at 9–37 is the Q motif element; that stretch reads QKFSDFALHAKVIEALENKGFHYCTPIQA. The 180-residue stretch at 40-219 folds into the Helicase ATP-binding domain; that stretch reads LPLTLAGRDV…FEQMNNAEYV (180 aa). Position 53 to 60 (53 to 60) interacts with ATP; it reads AQTGTGKT. Positions 165–168 match the DEAD box motif; sequence DEAD. One can recognise a Helicase C-terminal domain in the interval 245-390; sequence RLLQTLIEEE…QSKYNPDALL (146 aa). The tract at residues 386 to 421 is disordered; the sequence is PDALLSELPPPKRLTRARSGNGPRRTGAPRNRRRPG. The segment covering 405–414 has biased composition (low complexity); it reads GNGPRRTGAP.

It belongs to the DEAD box helicase family. RhlB subfamily. As to quaternary structure, component of the RNA degradosome, which is a multiprotein complex involved in RNA processing and mRNA degradation.

The protein resides in the cytoplasm. It catalyses the reaction ATP + H2O = ADP + phosphate + H(+). Functionally, DEAD-box RNA helicase involved in RNA degradation. Has RNA-dependent ATPase activity and unwinds double-stranded RNA. This Enterobacter sp. (strain 638) protein is ATP-dependent RNA helicase RhlB.